We begin with the raw amino-acid sequence, 366 residues long: IgG receptor FcRn large subunit p51 (366 aa).

The first 22 residues, 1–22 (MGMSQPGVLLSLLLVLLPQTWG), serve as a signal peptide directing secretion. The interval 23–111 (AEPRLPLMYH…RTLENQINGT (89 aa)) is alpha-1. The Extracellular segment spans residues 23 to 298 (AEPRLPLMYH…VDLDSPARSS (276 aa)). 4 N-linked (GlcNAc...) asparagine glycosylation sites follow: Asn-109, Asn-126, Asn-150, and Asn-247. The tract at residues 112 to 201 (FTLQGLLGCE…ERGRQNLEWK (90 aa)) is alpha-2. Disulfide bonds link Cys-120-Cys-183 and Cys-222-Cys-276. The tract at residues 202–291 (EPPSMRLKAR…GLAQPLTVDL (90 aa)) is alpha-3. An Ig-like C1-type domain is found at 203 to 290 (PPSMRLKARP…EGLAQPLTVD (88 aa)). Residues 293 to 298 (SPARSS) are connecting peptide. Residues 299 to 322 (VPVVGIILGLLLVVVAIAGGVLLW) traverse the membrane as a helical segment. The Cytoplasmic segment spans residues 323–366 (NRMRSGLPAPWLSLSGDDSGDLLPGGNLPPEAEPQGVNAFPATS). Ser-335 is subject to Phosphoserine. Residues 344–366 (LLPGGNLPPEAEPQGVNAFPATS) form a disordered region.

The protein belongs to the immunoglobulin superfamily. In terms of assembly, fcRn complex consists of two subunits: p51, and p14 which is equivalent to beta-2-microglobulin. It forms an MHC class I-like heterodimer. Interacts with albumin/ALB; this interaction regulates ALB homeostasis. In terms of tissue distribution, intestinal epithelium.

Its subcellular location is the cell membrane. It is found in the endosome membrane. In terms of biological role, cell surface receptor that transfers passive humoral immunity from the mother to the newborn. Binds to the Fc region of monomeric immunoglobulin gamma and mediates its selective uptake from milk. IgG in the milk is bound at the apical surface of the intestinal epithelium. The resultant FcRn-IgG complexes are transcytosed across the intestinal epithelium and IgG is released from FcRn into blood or tissue fluids. Throughout life, contributes to effective humoral immunity by recycling IgG and extending its half-life in the circulation. Mechanistically, monomeric IgG binding to FcRn in acidic endosomes of endothelial and hematopoietic cells recycles IgG to the cell surface where it is released into the circulation. In addition of IgG, regulates homeostasis of the other most abundant circulating protein albumin/ALB. This chain is IgG receptor FcRn large subunit p51 (Fcgrt), found in Rattus norvegicus (Rat).